The primary structure comprises 459 residues: Ribulose bisphosphate carboxylase large chain (459 aa).

K4 bears the N6,N6,N6-trimethyllysine mark. N113 and T163 together coordinate substrate. The active-site Proton acceptor is K165. K167 lines the substrate pocket. Positions 191, 193, and 194 each coordinate Mg(2+). K191 is modified (N6-carboxylysine). The active-site Proton acceptor is the H284. Substrate is bound by residues R285, H317, and S369.

It belongs to the RuBisCO large chain family. Type I subfamily. Heterohexadecamer of 8 large chains and 8 small chains; disulfide-linked. The disulfide link is formed within the large subunit homodimers. Mg(2+) serves as cofactor. In terms of processing, the disulfide bond which can form in the large chain dimeric partners within the hexadecamer appears to be associated with oxidative stress and protein turnover.

Its subcellular location is the plastid. It localises to the chloroplast. It catalyses the reaction 2 (2R)-3-phosphoglycerate + 2 H(+) = D-ribulose 1,5-bisphosphate + CO2 + H2O. It carries out the reaction D-ribulose 1,5-bisphosphate + O2 = 2-phosphoglycolate + (2R)-3-phosphoglycerate + 2 H(+). Functionally, ruBisCO catalyzes two reactions: the carboxylation of D-ribulose 1,5-bisphosphate, the primary event in carbon dioxide fixation, as well as the oxidative fragmentation of the pentose substrate in the photorespiration process. Both reactions occur simultaneously and in competition at the same active site. The polypeptide is Ribulose bisphosphate carboxylase large chain (Nyssa ogeche (Ogeechee tupelo)).